The primary structure comprises 203 residues: Outer-membrane lipoprotein LolB (203 aa).

A signal peptide spans 1–17 (MNRLFRLLPLASLVLTA). A lipid anchor (N-palmitoyl cysteine) is attached at cysteine 18. Residue cysteine 18 is the site of S-diacylglycerol cysteine attachment.

Belongs to the LolB family. In terms of assembly, monomer.

It localises to the cell outer membrane. Functionally, plays a critical role in the incorporation of lipoproteins in the outer membrane after they are released by the LolA protein. This is Outer-membrane lipoprotein LolB from Klebsiella pneumoniae (strain 342).